The sequence spans 440 residues: Proline--tRNA ligase (440 aa).

This sequence belongs to the class-II aminoacyl-tRNA synthetase family. ProS type 2 subfamily. As to quaternary structure, homodimer.

It localises to the cytoplasm. The enzyme catalyses tRNA(Pro) + L-proline + ATP = L-prolyl-tRNA(Pro) + AMP + diphosphate. Catalyzes the attachment of proline to tRNA(Pro) in a two-step reaction: proline is first activated by ATP to form Pro-AMP and then transferred to the acceptor end of tRNA(Pro). In Methylocella silvestris (strain DSM 15510 / CIP 108128 / LMG 27833 / NCIMB 13906 / BL2), this protein is Proline--tRNA ligase.